Here is a 298-residue protein sequence, read N- to C-terminus: Single myb histone 2 (298 aa).

The 61-residue stretch at Met1–Gly61 folds into the HTH myb-type domain. Positions Trp28–Ser57 form a DNA-binding region, H-T-H motif. Residues Ser124–Pro192 form the H15 domain. The stretch at Glu237–Leu278 forms a coiled coil.

This sequence belongs to the histone H1/H5 family. SMH subfamily. In terms of assembly, forms a homodimer and heterodimers.

The protein resides in the nucleus. The protein localises to the chromosome. It is found in the nucleolus. It localises to the telomere. Functionally, binds preferentially double-stranded telomeric repeats, but may also bind to the single telomeric strand. The chain is Single myb histone 2 (SMH2) from Zea mays (Maize).